The primary structure comprises 341 residues: DNA repair protein XRCC3 (341 aa).

N-acetylmethionine is present on Met-1. 107–114 (GRSSAGKT) provides a ligand contact to ATP.

Belongs to the RecA family. RAD51 subfamily. In terms of assembly, interacts with RAD51C and RAD51. Part of the CX3 complex consisting of RAD51C and XRCC3; the complex has a ring-like structure arranged into a flat disc around a central channel; CX3 can interact with RAD51 in vitro. Forms a complex with FANCD2, BRCA2 and phosphorylated FANCG. Interacts with SWSAP1 and ZSWIM7; involved in homologous recombination repair. Interacts directly with PALB2 which may serve as a scaffold for a HR complex containing PALB2, BRCA2, RAD51C, RAD51 and XRCC3.

It localises to the nucleus. The protein resides in the cytoplasm. The protein localises to the perinuclear region. It is found in the mitochondrion matrix. In terms of biological role, involved in the homologous recombination repair (HRR) pathway of double-stranded DNA, thought to repair chromosomal fragmentation, translocations and deletions. Part of the RAD21 paralog protein complex CX3 which acts in the BRCA1-BRCA2-dependent HR pathway. Upon DNA damage, CX3 acts downstream of RAD51 recruitment; the complex binds predominantly to the intersection of the four duplex arms of the Holliday junction (HJ) and to junctions of replication forks. Involved in HJ resolution and thus in processing HR intermediates late in the DNA repair process; the function may be linked to the CX3 complex and seems to involve GEN1 during mitotic cell cycle progression. Part of a PALB2-scaffolded HR complex containing BRCA2 and RAD51C and which is thought to play a role in DNA repair by HR. Plays a role in regulating mitochondrial DNA copy number under conditions of oxidative stress in the presence of RAD51 and RAD51C. The polypeptide is DNA repair protein XRCC3 (XRCC3) (Bos taurus (Bovine)).